The following is a 295-amino-acid chain: Apolipoprotein E (295 aa).

The N-terminal stretch at M1–A18 is a signal peptide. Tandem repeats lie at residues T80–S101, P102–G123, A124–G145, Q146–L167, T193–R211, and A212–A233. Positions T80–A233 are 6 X 22 AA approximate tandem repeats. M143 is modified (methionine sulfoxide). Residue S147 is modified to Phosphoserine. Residues H158–R168 are LDL and other lipoprotein receptors binding. Position 162–165 (L162–R165) interacts with heparin. The tract at residues A191–M268 is lipid-binding and lipoprotein association. Residues Q244 to H295 are homooligomerization. The specificity for association with VLDL stretch occupies residues R256 to M268.

This sequence belongs to the apolipoprotein A1/A4/E family. In terms of assembly, homotetramer. May interact with ABCA1; functionally associated with ABCA1 in the biogenesis of HDLs. May interact with APP/A4 amyloid-beta peptide; the interaction is extremely stable in vitro but its physiological significance is unclear. May interact with MAPT. May interact with MAP2. In the cerebrospinal fluid, interacts with secreted SORL1. Interacts with PMEL; this allows the loading of PMEL luminal fragment on ILVs to induce fibril nucleation. APOE exists as multiple glycosylated and sialylated glycoforms within cells and in plasma. The extent of glycosylation and sialylation are tissue and context specific. Post-translationally, glycated in plasma VLDL. In terms of processing, phosphorylated by FAM20C in the extracellular medium.

It localises to the secreted. The protein resides in the extracellular space. It is found in the extracellular matrix. The protein localises to the extracellular vesicle. Its subcellular location is the endosome. It localises to the multivesicular body. Functionally, APOE is an apolipoprotein, a protein associating with lipid particles, that mainly functions in lipoprotein-mediated lipid transport between organs via the plasma and interstitial fluids. APOE is a core component of plasma lipoproteins and is involved in their production, conversion and clearance. Apolipoproteins are amphipathic molecules that interact both with lipids of the lipoprotein particle core and the aqueous environment of the plasma. As such, APOE associates with chylomicrons, chylomicron remnants, very low density lipoproteins (VLDL) and intermediate density lipoproteins (IDL) but shows a preferential binding to high-density lipoproteins (HDL). It also binds a wide range of cellular receptors including the LDL receptor/LDLR, the LDL receptor-related proteins LRP1, LRP2 and LRP8 and the very low-density lipoprotein receptor/VLDLR that mediate the cellular uptake of the APOE-containing lipoprotein particles. Finally, APOE also has a heparin-binding activity and binds heparan-sulfate proteoglycans on the surface of cells, a property that supports the capture and the receptor-mediated uptake of APOE-containing lipoproteins by cells. A main function of APOE is to mediate lipoprotein clearance through the uptake of chylomicrons, VLDLs, and HDLs by hepatocytes. APOE is also involved in the biosynthesis by the liver of VLDLs as well as their uptake by peripheral tissues ensuring the delivery of triglycerides and energy storage in muscle, heart and adipose tissues. By participating in the lipoprotein-mediated distribution of lipids among tissues, APOE plays a critical role in plasma and tissues lipid homeostasis. APOE is also involved in two steps of reverse cholesterol transport, the HDLs-mediated transport of cholesterol from peripheral tissues to the liver, and thereby plays an important role in cholesterol homeostasis. First, it is functionally associated with ABCA1 in the biogenesis of HDLs in tissues. Second, it is enriched in circulating HDLs and mediates their uptake by hepatocytes. APOE also plays an important role in lipid transport in the central nervous system, regulating neuron survival and sprouting. This chain is Apolipoprotein E (APOE), found in Macaca mulatta (Rhesus macaque).